The sequence spans 516 residues: Cytochrome P450 monooxygenase asR2 (516 aa).

The chain crosses the membrane as a helical span at residues 9-29; it reads LNSITFSLLVFLGFVGVSQLI. N248 and N273 each carry an N-linked (GlcNAc...) asparagine glycan. C461 contributes to the heme binding site.

Belongs to the cytochrome P450 family. Requires heme as cofactor.

It is found in the membrane. It functions in the pathway secondary metabolite biosynthesis; terpenoid biosynthesis. Functionally, cytochrome P450 monooxygenase; part of the gene cluster that mediates the biosynthesis of xenovulene A, an unusual meroterpenoid that has potent inhibitory effects on the human gamma-aminobutyrate A (GABAA) benzodiazepine receptor. The first step of xenovulene A biosynthesis is the biosynthesis of 3-methylorcinaldehyde performed by the non-reducing polyketide synthase aspks1. The salicylate hydroxylase asL1 then catalyzes the oxidative dearomatization of 3-methylorcinaldehyde to yield a dearomatized hydroxycyclohexadione. The 2-oxoglutarate-dependent dioxygenase asL3 further catalyzes the oxidative ring expansion to provide the first tropolone metabolite. The cytochrome P450 monooxygenase asR2 allows the synthesis of tropolone hemiacetal. In parallel, a previously unrecognised class of terpene cyclase, asR6, produces alpha-humulene from farnesylpyrophosphate (FPP). The putative Diels-Alderase asR5 probably catalyzes the formation of the tropolone-humulene skeleton by linking humulene and the polyketide moiety. Oxidative-ring contractions catalyzed by asL4 and asL6 then processively remove carbon atoms from the polyketide to yield xenovulene A. In Sarocladium schorii (Acremonium strictum (strain IMI 501407)), this protein is Cytochrome P450 monooxygenase asR2.